A 249-amino-acid polypeptide reads, in one-letter code: Proteasome activator complex subunit 1 (249 aa).

The tract at residues 60 to 101 is disordered; sequence PLDIPVPDPVKEKEKGERKKQQEKEDKDEKKKGEDEDKGPPC. Residues 68–98 show a composition bias toward basic and acidic residues; the sequence is PVKEKEKGERKKQQEKEDKDEKKKGEDEDKG.

It belongs to the PA28 family. Heterodimer of PSME1 and PSME2, which forms a hexameric ring. PSME1 can form homoheptamers.

Functionally, implicated in immunoproteasome assembly and required for efficient antigen processing. The PA28 activator complex enhances the generation of class I binding peptides by altering the cleavage pattern of the proteasome. The chain is Proteasome activator complex subunit 1 (PSME1) from Macaca fascicularis (Crab-eating macaque).